A 55-amino-acid chain; its full sequence is TGB2 protein (55 aa).

Residues 20-39 (NAAFAVVLLLSLLIYGSRCL) traverse the membrane as a helical segment.

Belongs to the carlavirus/potexvirus TGB2 protein family.

The protein resides in the host membrane. In terms of biological role, the three proteins TGB1, TGB2 and TGB3 are required for virus movement. In Potato virus X (strain Xc) (PVX), this protein is TGB2 protein.